Here is a 138-residue protein sequence, read N- to C-terminus: Transcription antitermination protein NusB (138 aa).

The protein belongs to the NusB family.

In terms of biological role, involved in transcription antitermination. Required for transcription of ribosomal RNA (rRNA) genes. Binds specifically to the boxA antiterminator sequence of the ribosomal RNA (rrn) operons. This Geobacter sulfurreducens (strain ATCC 51573 / DSM 12127 / PCA) protein is Transcription antitermination protein NusB.